Reading from the N-terminus, the 378-residue chain is Beta-1,3-galactosyltransferase 4 (378 aa).

Residues 1-8 are Cytoplasmic-facing; that stretch reads MQLRLFRR. Residues 9 to 19 traverse the membrane as a helical; Signal-anchor for type II membrane protein segment; the sequence is LLLAALLLVIV. At 20–378 the chain is on the lumenal side; the sequence is WTLFGPSGLG…RCRAIAWLQS (359 aa). N-linked (GlcNAc...) asparagine glycosylation occurs at Asn-149.

Belongs to the glycosyltransferase 31 family. Highly expressed in heart, skeletal muscle and pancreas and, to a lesser extent, in brain, placenta, kidney, liver and lung.

The protein localises to the golgi apparatus membrane. It catalyses the reaction a ganglioside GM2 (d18:1(4E)) + UDP-alpha-D-galactose = a ganglioside GM1 (d18:1(4E)) + UDP + H(+). The enzyme catalyses a ganglioside GM2 + UDP-alpha-D-galactose = a ganglioside GM1 + UDP + H(+). The catalysed reaction is a ganglioside GD2 (d18:1(4E)) + UDP-alpha-D-galactose = a ganglioside GD1b (d18:1(4E)) + UDP + H(+). It carries out the reaction a ganglioside GA2 (d18:1(4E)) + UDP-alpha-D-galactose = a ganglioside GA1 (d18:1(4E)) + UDP + H(+). It functions in the pathway protein modification; protein glycosylation. Its function is as follows. Involved in GM1/GD1B/GA1 ganglioside biosynthesis. The chain is Beta-1,3-galactosyltransferase 4 from Homo sapiens (Human).